Here is a 287-residue protein sequence, read N- to C-terminus: Iron-sulfur cluster carrier protein (287 aa).

47 to 54 contacts ATP; the sequence is GKGGVGKS.

The protein belongs to the Mrp/NBP35 ATP-binding proteins family. As to quaternary structure, homodimer.

Binds and transfers iron-sulfur (Fe-S) clusters to target apoproteins. Can hydrolyze ATP. The sequence is that of Iron-sulfur cluster carrier protein from Pseudomonas fragi.